A 103-amino-acid polypeptide reads, in one-letter code: uncharacterized protein (103 aa).

The chain crosses the membrane as a helical span at residues 38–58 (FTTLITIYVAAFYTGVIGAAV).

It is found in the membrane. This is an uncharacterized protein from Arabidopsis thaliana (Mouse-ear cress).